Reading from the N-terminus, the 101-residue chain is Small ribosomal subunit protein eS24 (101 aa).

This sequence belongs to the eukaryotic ribosomal protein eS24 family.

In Methanosarcina acetivorans (strain ATCC 35395 / DSM 2834 / JCM 12185 / C2A), this protein is Small ribosomal subunit protein eS24.